The primary structure comprises 553 residues: Hydroxylamine reductase (553 aa).

Positions 3, 6, 15, and 21 each coordinate [4Fe-4S] cluster. H244, E268, C312, C406, C434, C459, E494, and K496 together coordinate hybrid [4Fe-2O-2S] cluster. Residue C406 is modified to Cysteine persulfide.

This sequence belongs to the HCP family. Monomer. [4Fe-4S] cluster serves as cofactor. It depends on hybrid [4Fe-2O-2S] cluster as a cofactor.

The protein localises to the cytoplasm. The catalysed reaction is A + NH4(+) + H2O = hydroxylamine + AH2 + H(+). Catalyzes the reduction of hydroxylamine to form NH(3) and H(2)O. In Nitratidesulfovibrio vulgaris (strain ATCC 29579 / DSM 644 / CCUG 34227 / NCIMB 8303 / VKM B-1760 / Hildenborough) (Desulfovibrio vulgaris), this protein is Hydroxylamine reductase.